The primary structure comprises 151 residues: Mini-ribonuclease 3 (151 aa).

Asp28 is a catalytic residue.

This sequence belongs to the MrnC RNase family. In terms of assembly, homodimer. It depends on Mg(2+) as a cofactor.

Its subcellular location is the cytoplasm. Functionally, involved in correct processing of both the 5' and 3' ends of 23S rRNA precursor. Processes 30S rRNA precursor transcript even in absence of ribonuclease 3 (Rnc); Rnc processes 30S rRNA into smaller rRNA precursors. The protein is Mini-ribonuclease 3 of Clostridium tetani (strain Massachusetts / E88).